Consider the following 35-residue polypeptide: U2-agatoxin-Aop1a (35 aa).

3 disulfide bridges follow: Cys3-Cys19, Cys10-Cys24, and Cys18-Cys34. Leucine amide is present on Leu35.

The protein belongs to the neurotoxin 01 (U2-agtx) family. As to expression, expressed by the venom gland.

The protein localises to the secreted. Functionally, insect-selective toxin causing rapid but reversible paralysis in crickets. Suppresses the excitatory postsynaptic potentials evoked in lobster neuromuscular synaptic preparations, possibly by blocking the presynaptic calcium channel (Cav). Induces instantaneous reversible paralysis when injected into crickets. The polypeptide is U2-agatoxin-Aop1a (Allagelena opulenta (Funnel weaving spider)).